The following is a 681-amino-acid chain: RNA polymerase sigma factor RpoD (681 aa).

2 disordered regions span residues 1 to 60 (MKKK…ETAK) and 239 to 270 (DDDENSVSDPKKDDDSEEDEENEERKKVVSEK). Positions 261 to 270 (EERKKVVSEK) are enriched in basic and acidic residues. Residues 446–516 (MAKSNLRLVV…SRAIADQART (71 aa)) are sigma-70 factor domain-2. Positions 470-473 (DLIQ) match the Interaction with polymerase core subunit RpoC motif. The segment at 525 to 601 (DTINRINKVM…DKNIVSSIDH (77 aa)) is sigma-70 factor domain-3. A sigma-70 factor domain-4 region spans residues 614–668 (VLDQLNEREKAVIRMRFGLLDDESDRTLEEIGKELNVTRERVRQIESSAIKKLRS). The segment at residues 641–660 (LEEIGKELNVTRERVRQIES) is a DNA-binding region (H-T-H motif).

It belongs to the sigma-70 factor family. RpoD/SigA subfamily. Interacts transiently with the RNA polymerase catalytic core.

The protein localises to the cytoplasm. Functionally, sigma factors are initiation factors that promote the attachment of RNA polymerase to specific initiation sites and are then released. This sigma factor is the primary sigma factor during exponential growth. The polypeptide is RNA polymerase sigma factor RpoD (Helicobacter pylori (strain J99 / ATCC 700824) (Campylobacter pylori J99)).